The following is an 89-amino-acid chain: Small ribosomal subunit protein uS15 (89 aa).

The protein belongs to the universal ribosomal protein uS15 family. As to quaternary structure, part of the 30S ribosomal subunit. Forms a bridge to the 50S subunit in the 70S ribosome, contacting the 23S rRNA.

Functionally, one of the primary rRNA binding proteins, it binds directly to 16S rRNA where it helps nucleate assembly of the platform of the 30S subunit by binding and bridging several RNA helices of the 16S rRNA. Forms an intersubunit bridge (bridge B4) with the 23S rRNA of the 50S subunit in the ribosome. The polypeptide is Small ribosomal subunit protein uS15 (Acaryochloris marina (strain MBIC 11017)).